The sequence spans 338 residues: MIQKNWQTLEKPSKLDITPGSDPKREATIVAGPLERGFGLTLGNAIRRVLLSSLQGAAVTSIHIDGVLHEFSSIPGVREDVTDIVLNIKAMALKMGAEGPRRMRLRAEGPCEVTAGMIETGADIEVLDPGHVICTLDSGARLNMELTVAMGKGYVPASQNRPEDAPIGLIPVDAIFSPVRKVAYKVENTRVGQTTDYDKLLLNVETNGAVSPEDAVAIAARILQDQLQMFINFEEPQAAVAETKADEIPFNKNLLRKVDELELSVRSANCLKNDNIVYIGDLVQKTEAEMLRTPNFGRKSLNEIKEVLAQMGLHLGMEIPNWPPENIEDLAKRLEEPY.

Polar residues predominate over residues 1–10; the sequence is MIQKNWQTLE. The segment at 1–24 is disordered; the sequence is MIQKNWQTLEKPSKLDITPGSDPK. The tract at residues 1-234 is alpha N-terminal domain (alpha-NTD); it reads MIQKNWQTLE…DQLQMFINFE (234 aa). The tract at residues 250–338 is alpha C-terminal domain (alpha-CTD); sequence FNKNLLRKVD…DLAKRLEEPY (89 aa).

It belongs to the RNA polymerase alpha chain family. In terms of assembly, homodimer. The RNAP catalytic core consists of 2 alpha, 1 beta, 1 beta' and 1 omega subunit. When a sigma factor is associated with the core the holoenzyme is formed, which can initiate transcription.

It catalyses the reaction RNA(n) + a ribonucleoside 5'-triphosphate = RNA(n+1) + diphosphate. DNA-dependent RNA polymerase catalyzes the transcription of DNA into RNA using the four ribonucleoside triphosphates as substrates. The protein is DNA-directed RNA polymerase subunit alpha of Rhodospirillum centenum (strain ATCC 51521 / SW).